A 495-amino-acid chain; its full sequence is Trigger factor (495 aa).

Residues 169–254 (GDRVAMDYVG…VKDVAAPGAV (86 aa)) form the PPIase FKBP-type domain. Positions 441 to 495 (LAEDEGEAKAETKKAAPKKKAAAKTEAAEAGEGEEAAAPKKKAAPKKKAADESAE) are disordered.

This sequence belongs to the FKBP-type PPIase family. Tig subfamily.

It localises to the cytoplasm. The catalysed reaction is [protein]-peptidylproline (omega=180) = [protein]-peptidylproline (omega=0). Its function is as follows. Involved in protein export. Acts as a chaperone by maintaining the newly synthesized protein in an open conformation. Functions as a peptidyl-prolyl cis-trans isomerase. This is Trigger factor from Rhizobium etli (strain CIAT 652).